A 154-amino-acid chain; its full sequence is Protein ripply (154 aa).

The short motif at 38 to 41 (WRPW) is the WRPW motif element. 2 disordered regions span residues 54 to 86 (IRER…FQHP) and 121 to 154 (EDPA…PILN). The segment at 85-119 (HPVKLHWSKPVYDYMYQYGKQLLDAFPVQATICIV) is ripply homology domain. Residues 121-140 (EDPAQSDDSDFESDYEDDSD) are compositionally biased toward acidic residues.

The protein belongs to the ripply family. In the late gastrula stage, expression appears in the dorsal presomitic mesoderm and in the first three pairs of nascent somites. Expressed strongly in forming somites and then expression is rapidly down-regulated except in the first somite pair where expression is maintained for a longer period. Also expressed in the presumptive notochord and in the tail bud at the 48 hour larval stage. Expression disappears by the 72 hour stage.

Its subcellular location is the nucleus. Functionally, may play a role in somitogenesis. In Branchiostoma belcheri (Amphioxus), this protein is Protein ripply.